We begin with the raw amino-acid sequence, 101 residues long: Small ribosomal subunit protein uS14 (101 aa).

The segment covering 1-11 (MAKKSAIETNE) has biased composition (basic and acidic residues). The segment at 1 to 20 (MAKKSAIETNERRRKLATGH) is disordered.

The protein belongs to the universal ribosomal protein uS14 family. In terms of assembly, part of the 30S ribosomal subunit. Contacts proteins S3 and S10.

Functionally, binds 16S rRNA, required for the assembly of 30S particles and may also be responsible for determining the conformation of the 16S rRNA at the A site. This chain is Small ribosomal subunit protein uS14, found in Xanthobacter autotrophicus (strain ATCC BAA-1158 / Py2).